We begin with the raw amino-acid sequence, 346 residues long: Cyclin-dependent kinase 20 (346 aa).

In terms of domain architecture, Protein kinase spans 4–288 (YCILGRIGEG…ASKALLHQYF (285 aa)). ATP contacts are provided by residues 10–18 (IGEGAHGIV) and lysine 33. Aspartate 127 functions as the Proton acceptor in the catalytic mechanism.

The protein belongs to the protein kinase superfamily. CMGC Ser/Thr protein kinase family. CDC2/CDKX subfamily. Monomer. Interacts with TBC1D32 and MAK.

The protein localises to the nucleus. The protein resides in the cytoplasm. It is found in the cell projection. Its subcellular location is the cilium. It carries out the reaction L-seryl-[protein] + ATP = O-phospho-L-seryl-[protein] + ADP + H(+). It catalyses the reaction L-threonyl-[protein] + ATP = O-phospho-L-threonyl-[protein] + ADP + H(+). Functionally, required for high-level Shh responses in the developing neural tube. Together with TBC1D32, controls the structure of the primary cilium by coordinating assembly of the ciliary membrane and axoneme, allowing GLI2 to be properly activated in response to SHH signaling. Involved in cell growth. Activates CDK2, a kinase involved in the control of the cell cycle, by phosphorylating residue 'Thr-160'. This Pongo abelii (Sumatran orangutan) protein is Cyclin-dependent kinase 20 (CDK20).